The following is a 261-amino-acid chain: Triosephosphate isomerase (261 aa).

10 to 12 is a substrate binding site; the sequence is NWK. Histidine 100 functions as the Electrophile in the catalytic mechanism. Glutamate 172 acts as the Proton acceptor in catalysis. Substrate contacts are provided by residues glycine 178, serine 218, and 239–240; that span reads GG.

It belongs to the triosephosphate isomerase family. As to quaternary structure, homodimer.

It localises to the cytoplasm. The catalysed reaction is D-glyceraldehyde 3-phosphate = dihydroxyacetone phosphate. Its pathway is carbohydrate biosynthesis; gluconeogenesis. It participates in carbohydrate degradation; glycolysis; D-glyceraldehyde 3-phosphate from glycerone phosphate: step 1/1. Functionally, involved in the gluconeogenesis. Catalyzes stereospecifically the conversion of dihydroxyacetone phosphate (DHAP) to D-glyceraldehyde-3-phosphate (G3P). The polypeptide is Triosephosphate isomerase (Mycobacteroides abscessus (strain ATCC 19977 / DSM 44196 / CCUG 20993 / CIP 104536 / JCM 13569 / NCTC 13031 / TMC 1543 / L948) (Mycobacterium abscessus)).